A 284-amino-acid chain; its full sequence is Acetylglutamate kinase (284 aa).

Residues 66–67 (GG), arginine 88, and asparagine 179 contribute to the substrate site.

The protein belongs to the acetylglutamate kinase family. ArgB subfamily.

It is found in the cytoplasm. The catalysed reaction is N-acetyl-L-glutamate + ATP = N-acetyl-L-glutamyl 5-phosphate + ADP. The protein operates within amino-acid biosynthesis; L-arginine biosynthesis; N(2)-acetyl-L-ornithine from L-glutamate: step 2/4. In terms of biological role, catalyzes the ATP-dependent phosphorylation of N-acetyl-L-glutamate. This chain is Acetylglutamate kinase, found in Actinobacillus pleuropneumoniae serotype 5b (strain L20).